A 782-amino-acid polypeptide reads, in one-letter code: Hypersensitive to pore-forming toxin protein 40 (782 aa).

The Tudor; degenerate domain occupies 138 to 203 (ESEIVPGAMY…TLFVSDQFSI (66 aa)). Composition is skewed to polar residues over residues 332-346 (SVNP…SSSM) and 413-443 (FEST…STIQ). Disordered regions lie at residues 332-351 (SVNP…DCPY), 413-448 (FEST…NEED), 472-492 (IERP…NMSE), and 617-672 (VAQG…LEDP). Positions 617-634 (VAQGSNAPKTAPNDSVNS) are enriched in polar residues. Positions 638–662 (DDIHETDKRGNHCKSVTEDPKDNKD) are enriched in basic and acidic residues.

The protein localises to the cytoplasm. It localises to the perinuclear region. The chain is Hypersensitive to pore-forming toxin protein 40 from Caenorhabditis elegans.